A 192-amino-acid polypeptide reads, in one-letter code: UPF0301 protein Bphyt_0868 (192 aa).

It belongs to the UPF0301 (AlgH) family.

This Paraburkholderia phytofirmans (strain DSM 17436 / LMG 22146 / PsJN) (Burkholderia phytofirmans) protein is UPF0301 protein Bphyt_0868.